A 236-amino-acid polypeptide reads, in one-letter code: Opacity protein opA50 (236 aa).

A signal peptide is located at residue alanine 1.

It belongs to the opacity porin family.

The protein resides in the cell outer membrane. Its function is as follows. Implicated in a number of adherence functions. OPA proteins are implicated in pathogenesis and are subject to phase variation. The polypeptide is Opacity protein opA50 (opaC) (Neisseria gonorrhoeae).